The primary structure comprises 159 residues: Probable GPI-anchored protein ANS1 (159 aa).

The first 20 residues, 1-20, serve as a signal peptide directing secretion; sequence MKCTLVSTLFAITNILVAHA. The PIR1/2/3 repeat unit spans residues 101–114; sequence AAISQISDGQIQAT. Residue glycine 137 is the site of GPI-anchor amidated glycine attachment. The propeptide at 138–159 is removed in mature form; that stretch reads AGMKVESKNMGYIVGVAALLFL.

Its subcellular location is the cell membrane. The chain is Probable GPI-anchored protein ANS1 (ANS1) from Saccharomyces cerevisiae (strain ATCC 204508 / S288c) (Baker's yeast).